We begin with the raw amino-acid sequence, 822 residues long: Fibroblast growth factor receptor 1 (822 aa).

The first 21 residues, 1 to 21 (MWSWKCLLFWAVLVTATLCTA), serve as a signal peptide directing secretion. At 22 to 376 (RPSPTLPEQA…AVMTSPLYLE (355 aa)) the chain is on the extracellular side. An Ig-like C2-type 1 domain is found at 25–119 (PTLPEQAQPW…DTTYFSVNVS (95 aa)). Cysteines 55 and 101 form a disulfide. N-linked (GlcNAc...) asparagine glycans are attached at residues N77 and N117. The disordered stretch occupies residues 120 to 154 (DALPSSEDDDDDDDSSSEEKETDNTKPNRMPVAPY). The segment covering 125–135 (SEDDDDDDDSS) has biased composition (acidic residues). The span at 136-145 (SEEKETDNTK) shows a compositional bias: basic and acidic residues. Ig-like C2-type domains are found at residues 158–246 (PEKM…YQLD) and 255–357 (PILQ…AWLT). Residues 160 to 177 (KMEKKLHAVPAAKTVKFK) form a heparin-binding region. Residues C178 and C230 are joined by a disulfide bond. Residues N227, N240, N264, N296, N317, and N330 are each glycosylated (N-linked (GlcNAc...) asparagine). An intrachain disulfide couples C277 to C341. Residues 377–397 (IIIYCTGAFLISCMVGSVIVY) traverse the membrane as a helical segment. Topologically, residues 398–822 (KMKSGTKKSD…QLANGGLKRR (425 aa)) are cytoplasmic. At Y463 the chain carries Phosphotyrosine; by autocatalysis. Residues 478 to 767 (LVLGKPLGEG…VALTSNQEYL (290 aa)) form the Protein kinase domain. Residues 484 to 490 (LGEGCFG), K514, 562 to 564 (EYA), and N568 contribute to the ATP site. A phosphotyrosine; by autocatalysis mark is found at Y583 and Y585. Catalysis depends on D623, which acts as the Proton acceptor. 2 residues coordinate ATP: R627 and D641. A phosphotyrosine; by autocatalysis mark is found at Y653, Y654, Y730, and Y766. The segment covering 778–792 (PSFPDTRSSTCSSGE) has biased composition (polar residues). The interval 778 to 822 (PSFPDTRSSTCSSGEDSVFSHEPLPEEPCLPRHPAQLANGGLKRR) is disordered.

Belongs to the protein kinase superfamily. Tyr protein kinase family. Fibroblast growth factor receptor subfamily. In terms of assembly, monomer. Homodimer after ligand binding. Interacts predominantly with FGF1 and FGF2, but can also interact with FGF3, FGF4, FGF5, FGF6, FGF8, FGF10, FGF19, FGF21, FGF22 and FGF23 (in vitro). Ligand specificity is determined by tissue-specific expression of isoforms, and differences in the third Ig-like domain are crucial for ligand specificity. Affinity for fibroblast growth factors (FGFs) is increased by heparan sulfate glycosaminoglycans that function as coreceptors. Likewise, KLB increases the affinity for FGF19, FGF21 and FGF23. Interacts (phosphorylated on Tyr-766) with PLCG1 (via SH2 domains). Interacts with FRS2. Interacts with RPS6KA1. Interacts (via C-terminus) with NEDD4 (via WW3 domain). Interacts with KL. Interacts with SHB (via SH2 domain). Interacts with GRB10. Interacts with ANOS1; this interaction does not interfere with FGF2-binding to FGFR1, but prevents binding of heparin-bound FGF2. Interacts with SOX2 and SOX3. Interacts with FLRT1, FLRT2 and FLRT3. Found in a ternary complex with FGF1 and ITGAV:ITGB3. Autophosphorylated. Binding of FGF family members together with heparan sulfate proteoglycan or heparin promotes receptor dimerization and autophosphorylation on tyrosine residues. Autophosphorylation occurs in trans between the two FGFR molecules present in the dimer and proceeds in a highly ordered manner. Initial autophosphorylation at Tyr-653 increases the kinase activity by a factor of 50 to 100. After this, Tyr-583 becomes phosphorylated, followed by phosphorylation of Tyr-463, Tyr-766, Tyr-583 and Tyr-585. In a third stage, Tyr-654 is autophosphorylated, resulting in a further tenfold increase of kinase activity. Phosphotyrosine residues provide docking sites for interacting proteins and so are crucial for FGFR1 function and its regulation. Post-translationally, ubiquitinated. FGFR1 is rapidly ubiquitinated by NEDD4 after autophosphorylation, leading to internalization and lysosomal degradation. CBL is recruited to activated FGFR1 via FRS2 and GRB2, and mediates ubiquitination and subsequent degradation of FGFR1. In terms of processing, N-glycosylated in the endoplasmic reticulum. The N-glycan chains undergo further maturation to an Endo H-resistant form in the Golgi apparatus. In terms of tissue distribution, detected in astrocytoma, neuroblastoma and adrenal cortex cell lines. Some isoforms are detected in foreskin fibroblast cell lines, however isoform 17, isoform 18 and isoform 19 are not detected in these cells.

It is found in the cell membrane. Its subcellular location is the nucleus. It localises to the cytoplasm. The protein resides in the cytosol. The protein localises to the cytoplasmic vesicle. It catalyses the reaction L-tyrosyl-[protein] + ATP = O-phospho-L-tyrosyl-[protein] + ADP + H(+). With respect to regulation, present in an inactive conformation in the absence of bound ligand. Ligand binding leads to dimerization and activation by sequential autophosphorylation on tyrosine residues. Inhibited by ARQ 069; this compound maintains the kinase in an inactive conformation and inhibits autophosphorylation. Inhibited by PD173074. Functionally, tyrosine-protein kinase that acts as a cell-surface receptor for fibroblast growth factors and plays an essential role in the regulation of embryonic development, cell proliferation, differentiation and migration. Required for normal mesoderm patterning and correct axial organization during embryonic development, normal skeletogenesis and normal development of the gonadotropin-releasing hormone (GnRH) neuronal system. Phosphorylates PLCG1, FRS2, GAB1 and SHB. Ligand binding leads to the activation of several signaling cascades. Activation of PLCG1 leads to the production of the cellular signaling molecules diacylglycerol and inositol 1,4,5-trisphosphate. Phosphorylation of FRS2 triggers recruitment of GRB2, GAB1, PIK3R1 and SOS1, and mediates activation of RAS, MAPK1/ERK2, MAPK3/ERK1 and the MAP kinase signaling pathway, as well as of the AKT1 signaling pathway. Promotes phosphorylation of SHC1, STAT1 and PTPN11/SHP2. In the nucleus, enhances RPS6KA1 and CREB1 activity and contributes to the regulation of transcription. FGFR1 signaling is down-regulated by IL17RD/SEF, and by FGFR1 ubiquitination, internalization and degradation. This Homo sapiens (Human) protein is Fibroblast growth factor receptor 1 (FGFR1).